A 268-amino-acid chain; its full sequence is Shikimate dehydrogenase (NADP(+)) (268 aa).

Shikimate contacts are provided by residues 13 to 15 (SLS) and Thr60. Catalysis depends on Lys64, which acts as the Proton acceptor. Residue Glu76 coordinates NADP(+). Residues Asn85 and Asp100 each coordinate shikimate. NADP(+) contacts are provided by residues 124-128 (GAGGA), 148-153 (NRTMAR), and Ile209. Position 211 (Tyr211) interacts with shikimate. Residue Gly232 participates in NADP(+) binding.

This sequence belongs to the shikimate dehydrogenase family. In terms of assembly, homodimer.

The enzyme catalyses shikimate + NADP(+) = 3-dehydroshikimate + NADPH + H(+). The protein operates within metabolic intermediate biosynthesis; chorismate biosynthesis; chorismate from D-erythrose 4-phosphate and phosphoenolpyruvate: step 4/7. Functionally, involved in the biosynthesis of the chorismate, which leads to the biosynthesis of aromatic amino acids. Catalyzes the reversible NADPH linked reduction of 3-dehydroshikimate (DHSA) to yield shikimate (SA). The protein is Shikimate dehydrogenase (NADP(+)) of Staphylococcus aureus (strain bovine RF122 / ET3-1).